Here is a 223-residue protein sequence, read N- to C-terminus: RNA-free ribonuclease P (223 aa).

It belongs to the HARP family.

The catalysed reaction is Endonucleolytic cleavage of RNA, removing 5'-extranucleotides from tRNA precursor.. Its function is as follows. RNA-free RNase P that catalyzes the removal of the 5'-leader sequence from pre-tRNA to produce the mature 5'-terminus. This chain is RNA-free ribonuclease P, found in Methanococcus vannielii (strain ATCC 35089 / DSM 1224 / JCM 13029 / OCM 148 / SB).